We begin with the raw amino-acid sequence, 190 residues long: Peptidyl-tRNA hydrolase (190 aa).

Phe-14 contacts tRNA. His-19 (proton acceptor) is an active-site residue. TRNA-binding residues include Met-64, Asn-66, and Asn-112.

It belongs to the PTH family. As to quaternary structure, monomer.

It localises to the cytoplasm. It carries out the reaction an N-acyl-L-alpha-aminoacyl-tRNA + H2O = an N-acyl-L-amino acid + a tRNA + H(+). Functionally, hydrolyzes ribosome-free peptidyl-tRNAs (with 1 or more amino acids incorporated), which drop off the ribosome during protein synthesis, or as a result of ribosome stalling. Its function is as follows. Catalyzes the release of premature peptidyl moieties from peptidyl-tRNA molecules trapped in stalled 50S ribosomal subunits, and thus maintains levels of free tRNAs and 50S ribosomes. This chain is Peptidyl-tRNA hydrolase, found in Staphylococcus saprophyticus subsp. saprophyticus (strain ATCC 15305 / DSM 20229 / NCIMB 8711 / NCTC 7292 / S-41).